Consider the following 393-residue polypeptide: MALKVAIAAGSAAKAIFKPALLCRPWEVLAAHEAPRRSISSQQTIPPSAKYGGRHTVTMIPGDGIGPELMLHVKSVFRHACVPVDFEEVHVSSNADEEDIRNAIMAIRRNRVALKGNIETNHDLPPSHKSRNNILRTSLDLYANVIHCKSLPGVVTRHKDIDILIVRENTEGEYSSLEHESVAGVVESLKIITKAKSLRIAEYAFKLAQESGRKKVTAVHKANIMKLGDGLFLQCCREVAARYPQITFDSMIVDNTTMQLVSRPQQFDVMVMPNLYGNIVNNVCAGLVGGPGLVAGANYGHVYAVFETATRNTGKSIANKNIANPTATLLASCMMLDHLKLHSYATSIRKAVLASMDNENMHTPDIGGQGTTSQAIQDIIRHIRIINGRAVEA.

Residues Met-1–Ile-39 constitute a mitochondrion transit peptide. Thr-120 lines the citrate pocket. Position 130 is a phosphoserine (Ser-130). Asn-133 serves as a coordination point for citrate. Substrate contacts are provided by Arg-136 and Arg-167. Lys-206 carries the N6-acetyllysine modification. N6-succinyllysine is present on Lys-226. Asp-254 contacts substrate. Residue Asp-254 coordinates Mn(2+). ADP contacts are provided by Asn-312, Thr-313, and Asn-324.

Belongs to the isocitrate and isopropylmalate dehydrogenases family. Heterooligomer of subunits alpha (IDH3A), beta (IDH3B), and gamma (IDH3G) in the apparent ratio of 2:1:1. The heterodimer containing one IDH3A and one IDH3B subunit and the heterodimer containing one IDH3A and one IDH3G subunit assemble into a heterotetramer (which contains two subunits of IDH3A, one of IDH3B and one of IDH3G) and further into the heterooctamer. Mg(2+) is required as a cofactor. Mn(2+) serves as cofactor.

The protein localises to the mitochondrion. With respect to regulation, the heterotetramer and the heterodimer composed of IDH3A and IDH3G subunits can be allosterically activated by citrate (CIT) or/and ADP, and the two activators can act independently or synergistically. The heterodimer composed of IDH3A and IDH3B subunits cannot be allosterically regulated and the allosteric regulation of the heterotetramer is through the IDH3G subunit and not the IDH3B subunit. The IDH3G subunit contains the allosteric site which consists of a CIT-binding site and an ADP-binding site, and the binding of CIT and ADP causes conformational changes at the allosteric site which are transmitted to the active site in the catalytic subunit (IDH3A) through a cascade of conformational changes at the heterodimer interface, leading to stabilization of the isocitrate-binding at the active site and thus activation of the enzyme. ATP can activate the heterotetramer and the heterodimer composed of IDH3A and IDH3G subunits at low concentrations but inhibits their activities at high concentrations, whereas ATP exhibits only inhibitory effect on the heterodimer composed of IDH3A and IDH3B subunits. Functionally, regulatory subunit which plays a role in the allosteric regulation of the enzyme catalyzing the decarboxylation of isocitrate (ICT) into alpha-ketoglutarate. The heterodimer composed of the alpha (IDH3A) and beta (IDH3B) subunits and the heterodimer composed of the alpha (IDH3A) and gamma (IDH3G) subunits, have considerable basal activity but the full activity of the heterotetramer (containing two subunits of IDH3A, one of IDH3B and one of IDH3G) requires the assembly and cooperative function of both heterodimers. The polypeptide is Isocitrate dehydrogenase [NAD] subunit gamma 1, mitochondrial (Idh3g) (Rattus norvegicus (Rat)).